The primary structure comprises 673 residues: Synaptotagmin-like protein 4 (673 aa).

Residues isoleucine 4–glutamine 122 enclose the RabBD domain. The FYVE-type zinc finger occupies cysteine 63–cysteine 105. A disordered region spans residues phenylalanine 184–aspartate 253. Phosphoserine occurs at positions 202, 205, 218, 222, and 275. A C2 1 domain is found at valine 358 to leucine 480. Position 490 is a phosphoserine (serine 490). The 127-residue stretch at proline 509–methionine 635 folds into the C2 2 domain.

As to quaternary structure, part of a ternary complex containing STX1A and RAB27A. Can bind both dominant negative and dominant active mutants of RAB27A. Binds STXBP1, RAB3A, RAB8A and RAB27B. Interacts with MYO5A. As to expression, detected in the pancreatic islet, in particular in insulin-positive beta cells, and in pituitary.

The protein resides in the membrane. It localises to the cytoplasmic vesicle. Its subcellular location is the secretory vesicle membrane. Its function is as follows. Modulates exocytosis of dense-core granules and secretion of hormones in the pancreas and the pituitary. Interacts with vesicles containing negatively charged phospholipids in a Ca(2+)-independent manner. In Mus musculus (Mouse), this protein is Synaptotagmin-like protein 4 (Sytl4).